The primary structure comprises 373 residues: Innexin shaking-B (373 aa).

Topologically, residues M1–S21 are cytoplasmic. A helical transmembrane segment spans residues P22–V42. Over T43–K106 the chain is Extracellular. A helical membrane pass occupies residues I107 to T127. The Cytoplasmic segment spans residues P128 to N176. The helical transmembrane segment at W177–L199 threads the bilayer. Over M200–K268 the chain is Extracellular. A helical transmembrane segment spans residues I269 to F289. Residues Y290–A373 lie on the Cytoplasmic side of the membrane.

It belongs to the pannexin family. As to quaternary structure, monomer.

It is found in the cell membrane. The protein resides in the cell junction. Its subcellular location is the gap junction. Functionally, structural component of the gap junctions at electrical synapses in distal and mid-depth levels in the lamina. The sequence is that of Innexin shaking-B from Anopheles gambiae (African malaria mosquito).